A 203-amino-acid chain; its full sequence is Orotate phosphoribosyltransferase (203 aa).

5-phospho-alpha-D-ribose 1-diphosphate contacts are provided by residues Arg94, Lys98, His100, and 120–128; that span reads EDLISTGGS. Ser124 contributes to the orotate binding site.

This sequence belongs to the purine/pyrimidine phosphoribosyltransferase family. PyrE subfamily. As to quaternary structure, homodimer. Mg(2+) serves as cofactor.

The catalysed reaction is orotidine 5'-phosphate + diphosphate = orotate + 5-phospho-alpha-D-ribose 1-diphosphate. It functions in the pathway pyrimidine metabolism; UMP biosynthesis via de novo pathway; UMP from orotate: step 1/2. Its function is as follows. Catalyzes the transfer of a ribosyl phosphate group from 5-phosphoribose 1-diphosphate to orotate, leading to the formation of orotidine monophosphate (OMP). The chain is Orotate phosphoribosyltransferase from Staphylococcus aureus (strain Mu50 / ATCC 700699).